We begin with the raw amino-acid sequence, 357 residues long: DNA polymerase IV 2 (357 aa).

A UmuC domain is found at 4–184; that stretch reads IIHVDMDAFY…LAVKKFHGVG (181 aa). Mg(2+) contacts are provided by aspartate 8 and aspartate 102. The active site involves glutamate 103.

The protein belongs to the DNA polymerase type-Y family. In terms of assembly, monomer. The cofactor is Mg(2+).

The protein localises to the cytoplasm. It carries out the reaction DNA(n) + a 2'-deoxyribonucleoside 5'-triphosphate = DNA(n+1) + diphosphate. Its function is as follows. Poorly processive, error-prone DNA polymerase involved in untargeted mutagenesis. Copies undamaged DNA at stalled replication forks, which arise in vivo from mismatched or misaligned primer ends. These misaligned primers can be extended by PolIV. Exhibits no 3'-5' exonuclease (proofreading) activity. May be involved in translesional synthesis, in conjunction with the beta clamp from PolIII. This chain is DNA polymerase IV 2 (dinB2), found in Agrobacterium fabrum (strain C58 / ATCC 33970) (Agrobacterium tumefaciens (strain C58)).